The chain runs to 412 residues: Serine hydroxymethyltransferase (412 aa).

(6S)-5,6,7,8-tetrahydrofolate is bound by residues Leu117 and 121-123 (GHL). N6-(pyridoxal phosphate)lysine is present on Lys226.

It belongs to the SHMT family. In terms of assembly, homodimer. Pyridoxal 5'-phosphate serves as cofactor.

Its subcellular location is the cytoplasm. It catalyses the reaction (6R)-5,10-methylene-5,6,7,8-tetrahydrofolate + glycine + H2O = (6S)-5,6,7,8-tetrahydrofolate + L-serine. It participates in one-carbon metabolism; tetrahydrofolate interconversion. The protein operates within amino-acid biosynthesis; glycine biosynthesis; glycine from L-serine: step 1/1. Its function is as follows. Catalyzes the reversible interconversion of serine and glycine with tetrahydrofolate (THF) serving as the one-carbon carrier. This reaction serves as the major source of one-carbon groups required for the biosynthesis of purines, thymidylate, methionine, and other important biomolecules. Also exhibits THF-independent aldolase activity toward beta-hydroxyamino acids, producing glycine and aldehydes, via a retro-aldol mechanism. This is Serine hydroxymethyltransferase from Staphylococcus epidermidis (strain ATCC 35984 / DSM 28319 / BCRC 17069 / CCUG 31568 / BM 3577 / RP62A).